A 282-amino-acid polypeptide reads, in one-letter code: 2-dehydro-3-deoxyphosphooctonate aldolase (282 aa).

Belongs to the KdsA family.

It localises to the cytoplasm. The enzyme catalyses D-arabinose 5-phosphate + phosphoenolpyruvate + H2O = 3-deoxy-alpha-D-manno-2-octulosonate-8-phosphate + phosphate. It participates in carbohydrate biosynthesis; 3-deoxy-D-manno-octulosonate biosynthesis; 3-deoxy-D-manno-octulosonate from D-ribulose 5-phosphate: step 2/3. Its pathway is bacterial outer membrane biogenesis; lipopolysaccharide biosynthesis. This Agrobacterium fabrum (strain C58 / ATCC 33970) (Agrobacterium tumefaciens (strain C58)) protein is 2-dehydro-3-deoxyphosphooctonate aldolase.